The chain runs to 389 residues: Chalcone synthase 2 (389 aa).

Residue Cys164 is part of the active site.

It belongs to the thiolase-like superfamily. Chalcone/stilbene synthases family.

The enzyme catalyses (E)-4-coumaroyl-CoA + 3 malonyl-CoA + 3 H(+) = 2',4,4',6'-tetrahydroxychalcone + 3 CO2 + 4 CoA. The protein operates within secondary metabolite biosynthesis; flavonoid biosynthesis. Functionally, the primary product of this enzyme is 4,2',4',6'-tetrahydroxychalcone (also termed naringenin-chalcone or chalcone) which can under specific conditions spontaneously isomerize into naringenin. This Trifolium subterraneum (Subterranean clover) protein is Chalcone synthase 2 (CHS2).